Reading from the N-terminus, the 470-residue chain is Uronate isomerase (470 aa).

This sequence belongs to the metallo-dependent hydrolases superfamily. Uronate isomerase family.

It catalyses the reaction D-glucuronate = D-fructuronate. The catalysed reaction is aldehydo-D-galacturonate = keto-D-tagaturonate. It functions in the pathway carbohydrate metabolism; pentose and glucuronate interconversion. In Cronobacter sakazakii (strain ATCC BAA-894) (Enterobacter sakazakii), this protein is Uronate isomerase.